The primary structure comprises 448 residues: Beta-alanine--pyruvate aminotransferase (448 aa).

Tryptophan 61 contacts substrate. A pyridoxal 5'-phosphate-binding site is contributed by glycine 120 to serine 121. An N6-(pyridoxal phosphate)lysine modification is found at lysine 288. Threonine 327 is a binding site for pyridoxal 5'-phosphate. Substrate contacts are provided by arginine 414 and glutamine 421.

The protein belongs to the class-III pyridoxal-phosphate-dependent aminotransferase family. Homotetramer. Pyridoxal 5'-phosphate is required as a cofactor.

It catalyses the reaction 3-oxopropanoate + L-alanine = beta-alanine + pyruvate. Inhibited by gabaculine (5-amino-1,3-cyclohexadienylcarboxylic acid). Involved in the degradation of beta-alanine. Catalyzes the transfer of the amino group from beta-alanine to pyruvate to yield L-alanine and 3-oxopropanoate. It can also accept both 4-aminobutyrate and (S)-alpha-methylbenzylamine (MBA) as amino-group donors in the presence of pyruvate as an amine acceptor. The polypeptide is Beta-alanine--pyruvate aminotransferase (bauA) (Pseudomonas aeruginosa (strain ATCC 15692 / DSM 22644 / CIP 104116 / JCM 14847 / LMG 12228 / 1C / PRS 101 / PAO1)).